A 714-amino-acid polypeptide reads, in one-letter code: Nucleolin (714 aa).

A disordered region spans residues 1-303; the sequence is MVKLAKAGKT…AKKQKVEGSE (303 aa). N6-acetyllysine occurs at positions 9, 15, and 16. Residues 24–42 show a composition bias toward acidic residues; the sequence is VEEDSEDEEMSEEEDDSSG. Phosphoserine occurs at positions 28, 34, 40, and 41. Residues 55–106 are compositionally biased toward low complexity; that stretch reads ATATPAKKVVVSQTKKVAVPTPAKKAAVTPGKKAAATPAKKAVTPAKAVATP. Copy 1 of the repeat occupies 57-64; the sequence is ATPAKKVV. An 8 X 8 AA tandem repeats of X-T-P-X-K-K-X-X region spans residues 57 to 134; it reads ATPAKKVVVS…GAVTPAKGAK (78 aa). Phosphoserine is present on Ser-66. Phosphothreonine is present on residues Thr-68, Thr-75, Thr-83, and Thr-91. 3 repeat units span residues 74 to 81, 82 to 89, and 90 to 97. Residue Lys-95 is modified to N6-acetyllysine. Thr-98 is subject to Phosphothreonine. Residues 98–103 form a 5; truncated repeat; the sequence is TPAKAV. Position 101 is an N6-acetyllysine (Lys-101). Residues 104-111 form repeat 6; the sequence is ATPGKKGA. Thr-105 bears the Phosphothreonine mark. Position 108 is an N6-acetyllysine (Lys-108). Position 112 is a phosphothreonine (Thr-112). Lys-115 is subject to N6-acetyllysine. 2 repeat units span residues 119 to 126 and 127 to 134. Position 120 is a phosphothreonine (Thr-120). Position 123 is an N6-acetyllysine (Lys-123). Phosphoserine occurs at positions 144 and 157. Positions 144–170 are enriched in acidic residues; it reads SDEDEDDDDDEDDSDEDEEDEEEDEFE. The segment covering 171 to 187 has biased composition (low complexity); sequence PPVVKGKQGKVAAAAPA. Ser-188 bears the Phosphoserine mark. Residues 188-216 show a composition bias toward acidic residues; that stretch reads SEDEDEEEDEEEEEEDEEEEDDSEEEEAM. Position 219 is a phosphothreonine (Thr-219). Acidic residues predominate over residues 240 to 272; the sequence is EEDDDDEEEDEDEEEDEEEEEDEEEEEEEEEEE. Residues 285–301 show a composition bias toward basic and acidic residues; the sequence is MTKQKEVPEAKKQKVEG. A Glycyl lysine isopeptide (Lys-Gly) (interchain with G-Cter in SUMO1); alternate cross-link involves residue Lys-298. Lys-298 participates in a covalent cross-link: Glycyl lysine isopeptide (Lys-Gly) (interchain with G-Cter in SUMO2); alternate. A Phosphoserine modification is found at Ser-302. 2 consecutive RRM domains span residues 308–384 and 394–467; these read FNLF…KPKG and RTLL…YTGE. Lys-319 carries the N6-acetyllysine modification. A Glycyl lysine isopeptide (Lys-Gly) (interchain with G-Cter in SUMO1); alternate cross-link involves residue Lys-325. A Glycyl lysine isopeptide (Lys-Gly) (interchain with G-Cter in SUMO2); alternate cross-link involves residue Lys-325. At Lys-349 the chain carries N6-acetyllysine. At Ser-357 the chain carries Phosphoserine. At Thr-368 the chain carries Phosphothreonine. A Glycyl lysine isopeptide (Lys-Gly) (interchain with G-Cter in SUMO2) cross-link involves residue Lys-371. Lys-378 is covalently cross-linked (Glycyl lysine isopeptide (Lys-Gly) (interchain with G-Cter in SUMO2); alternate). At Lys-378 the chain carries N6-acetyllysine; alternate. Lys-399 is modified (N6-acetyllysine). The residue at position 402 (Ser-402) is a Phosphoserine. Thr-406 is modified (phosphothreonine). Residues Lys-428 and Lys-445 each carry the N6-acetyllysine modification. Phosphoserine is present on residues Ser-459 and Ser-461. Lys-468 and Lys-477 each carry N6-acetyllysine. The RRM 3 domain occupies 486–560; sequence KTLVLSNLSY…RTIRLELQGP (75 aa). Residue Lys-513 forms a Glycyl lysine isopeptide (Lys-Gly) (interchain with G-Cter in SUMO2); alternate linkage. Residue Lys-513 is modified to N6-acetyllysine; alternate. Lys-521 is modified (N6-acetyllysine). Phosphoserine is present on Ser-563. Lys-572 carries the post-translational modification N6-acetyllysine. Residues 572–647 form the RRM 4 domain; sequence KTLFVKGLSE…NKVTLDWAKP (76 aa). Lys-577 participates in a covalent cross-link: Glycyl lysine isopeptide (Lys-Gly) (interchain with G-Cter in SUMO2); alternate. Residue Lys-577 is modified to N6-acetyllysine; alternate. Ser-580 carries the post-translational modification Phosphoserine. Residue Lys-589 forms a Glycyl lysine isopeptide (Lys-Gly) (interchain with G-Cter in SUMO1); alternate linkage. A Glycyl lysine isopeptide (Lys-Gly) (interchain with G-Cter in SUMO2); alternate cross-link involves residue Lys-589. Ser-591 and Ser-619 each carry phosphoserine. A Glycyl lysine isopeptide (Lys-Gly) (interchain with G-Cter in SUMO2) cross-link involves residue Lys-624. Positions 642–714 are disordered; that stretch reads LDWAKPKGEG…KPQGKKTKFE (73 aa). Lys-646 carries the post-translational modification N6-acetyllysine. Residues 650-703 are compositionally biased toward gly residues; it reads EGGFGGRGGGRGGFGGRGGGRGGGRGGFGGRGRGGFGGRGGFRGGRGGGGGGGD. An asymmetric dimethylarginine mark is found at Arg-656, Arg-660, Arg-666, Arg-670, Arg-674, Arg-680, Arg-682, Arg-688, and Arg-692. Residue Arg-695 is modified to Asymmetric dimethylarginine; alternate. Arg-695 carries the omega-N-methylarginine; alternate modification.

As to quaternary structure, identified in a IGF2BP1-dependent mRNP granule complex containing untranslated mRNAs. Component of the SWAP complex that consists of NPM1, NCL/nucleolin, PARP1 and SWAP70. Component of a complex which is at least composed of HTATSF1/Tat-SF1, the P-TEFb complex components CDK9 and CCNT1, RNA polymerase II, SUPT5H, and NCL/nucleolin. Interacts with AICDA. Interacts with APTX. Interacts with C1QBP. Interacts with ERBB4. Interacts (via C-terminus) with FMR1 isoform 6 (via N-terminus). Interacts with GZF1; this interaction is important for nucleolar localization of GZF1. Interacts with NSUN2. Interacts with NVL. Interacts (via N-terminus domain) with SETX. Interacts (via RRM1 and C-terminal RRM4/Arg/Gly-rich domains) with TERT; the interaction is important for nucleolar localization of TERT. Interacts with WDR46. Interacts with ZFP36. Interacts with LRRC34. Interacts with RRP1B. Interacts with HNRNPU; this interaction occurs during mitosis. Interacts with RIOK1; RIOK1 recruits NCL to PRMT5 for symmetrically methylation. Interacts with ZBTB7B. Interacts with MDK; this interaction promotes NCL clustering and lateral movements of this complex into lipid rafts leading to MDK internalization. Interacts with HDGF. Interacts with ALKBH2. Interacts with IGFBP5; this interaction is necessary for IGFBP5 localization to the nucleus. Interacts with DDX24 (when ubiquitinated); this interaction may be important during ribosome biogenesis. In terms of processing, some glutamate residues are glycylated by TTLL8. This modification occurs exclusively on glutamate residues and results in a glycine chain on the gamma-carboxyl group. Post-translationally, symmetrically methylated by PRMT5.

It localises to the nucleus. The protein resides in the nucleolus. The protein localises to the cytoplasm. Nucleolin is the major nucleolar protein of growing eukaryotic cells. It is found associated with intranucleolar chromatin and pre-ribosomal particles. It induces chromatin decondensation by binding to histone H1. It is thought to play a role in pre-rRNA transcription and ribosome assembly. May play a role in the process of transcriptional elongation. Binds RNA oligonucleotides with 5'-UUAGGG-3' repeats more tightly than the telomeric single-stranded DNA 5'-TTAGGG-3' repeats. This is Nucleolin (NCL) from Mesocricetus auratus (Golden hamster).